A 386-amino-acid polypeptide reads, in one-letter code: Cytochrome b (386 aa).

The next 4 membrane-spanning stretches (helical) occupy residues 32-52 (FGSL…TLAM), 76-98 (WMIR…LHIG), 113-133 (PWSI…LGYV), and 179-199 (FFSL…MHLL). Heme b contacts are provided by H82 and H96. Residues H183 and H197 each contribute to the heme b site. H202 is a binding site for a ubiquinone. Transmembrane regions (helical) follow at residues 225–245 (YTFK…LFLF), 289–309 (LGGV…PLLD), 321–341 (LMKF…WCGS), and 348–368 (FITL…IIVP).

The protein belongs to the cytochrome b family. Fungal cytochrome b-c1 complex contains 10 subunits; 3 respiratory subunits, 2 core proteins and 5 low-molecular weight proteins. Cytochrome b-c1 complex is a homodimer. It depends on heme b as a cofactor.

It localises to the mitochondrion inner membrane. In terms of biological role, component of the ubiquinol-cytochrome c reductase complex (complex III or cytochrome b-c1 complex) that is part of the mitochondrial respiratory chain. The b-c1 complex mediates electron transfer from ubiquinol to cytochrome c. Contributes to the generation of a proton gradient across the mitochondrial membrane that is then used for ATP synthesis. The chain is Cytochrome b (cob) from Rhizopus oryzae (Mucormycosis agent).